The chain runs to 149 residues: Ribonuclease pancreatic alpha-type (149 aa).

A signal peptide spans 1 to 25; that stretch reads MGLEKSFILFSLLVLVLGWVQPSLG. Substrate-binding residues include Lys32 and Arg35. His37 functions as the Proton acceptor in the catalytic mechanism. Cystine bridges form between Cys51–Cys109, Cys65–Cys120, Cys83–Cys135, and Cys90–Cys97. Substrate is bound by residues 66 to 70, Lys91, and Arg110; that span reads KPVNT. The active-site Proton donor is His144.

It belongs to the pancreatic ribonuclease family. Monomer.

It is found in the secreted. The enzyme catalyses an [RNA] containing cytidine + H2O = an [RNA]-3'-cytidine-3'-phosphate + a 5'-hydroxy-ribonucleotide-3'-[RNA].. It catalyses the reaction an [RNA] containing uridine + H2O = an [RNA]-3'-uridine-3'-phosphate + a 5'-hydroxy-ribonucleotide-3'-[RNA].. Its function is as follows. Endonuclease that catalyzes the cleavage of RNA on the 3' side of pyrimidine nucleotides. Acts on single-stranded and double-stranded RNA. This Rattus fuscipes (Bush rat) protein is Ribonuclease pancreatic alpha-type.